The following is a 233-amino-acid chain: Protein TIPIN homolog (233 aa).

Residues 1-14 (MDEMEDFFENDELD) are compositionally biased toward acidic residues. Disordered stretches follow at residues 1–39 (MDEM…RVVE) and 134–233 (GETG…NNDW). Basic and acidic residues-rich tracts occupy residues 163 to 190 (DLFK…KTAE) and 197 to 216 (EEYR…AKEA). Positions 217–227 (ADEDALMEDFG) are enriched in acidic residues.

It belongs to the CSM3 family.

It is found in the cytoplasm. It localises to the nucleus. Functionally, required for normal progression of S-phase. Important for cell survival after DNA damage or replication stress. This is Protein TIPIN homolog from Caenorhabditis elegans.